Reading from the N-terminus, the 443-residue chain is Enolase B (443 aa).

Residues His-156 and Glu-165 each contribute to the substrate site. Glu-208 functions as the Proton donor in the catalytic mechanism. Mg(2+) is bound by residues Asp-243, Glu-296, and Asp-323. Residues Glu-296 and Asp-323 each coordinate substrate. Lys-348 (proton acceptor) is an active-site residue. Substrate is bound by residues 375–378 (SHRS) and Lys-399.

Belongs to the enolase family. As to quaternary structure, homodimer. Mg(2+) serves as cofactor.

The protein resides in the cytoplasm. The enzyme catalyses (2R)-2-phosphoglycerate = phosphoenolpyruvate + H2O. The protein operates within carbohydrate degradation; glycolysis; pyruvate from D-glyceraldehyde 3-phosphate: step 4/5. This Dictyostelium discoideum (Social amoeba) protein is Enolase B (enoB).